A 924-amino-acid chain; its full sequence is Protein SMAX1-LIKE 2 (924 aa).

Positions 8 to 181 (IQQTLTPEAA…SAIEQSLIGN (174 aa)) constitute a Clp R domain. Residues 12-83 (LTPEAATVLN…LCFSVALERL (72 aa)) are repeat 1. A compositionally biased stretch (low complexity) spans 86–105 (TSTTTTTTSSSSSSSPSQTQ). The interval 86 to 107 (TSTTTTTTSSSSSSSPSQTQEP) is disordered. The interval 109 to 181 (LSNALTAALK…SAIEQSLIGN (73 aa)) is repeat 2. The interval 522–552 (TRSDITPPGSPVGTDLVLGRPNRGLSSPEKK) is disordered. The short motif at 780–784 (FDLNE) is the EAR element.

The protein belongs to the ClpA/ClpB family. As to quaternary structure, interacts probably with TPL/TPR in an EAR-motif dependent manner. Expressed in seedlings and leaves. Detected in roots and axillary branches.

Its function is as follows. Probable component of a transcriptional corepressor complex that acts specifically in the karrikin pathway. Controls seedling growth redundantly with SMAX1, but is not involved in leaf morphology, shoot branching or germination control. The protein is Protein SMAX1-LIKE 2 of Arabidopsis thaliana (Mouse-ear cress).